The chain runs to 184 residues: MEKYKLRKNNTILLYDYSINFSIKDNVKLEKKRFNMNKNKIKKRGQLSVDFVLAILFLMLVSLFIYYNALTFTNNTTDALIVDRMYSIADTFENYAILSYTKNETIVLKLKPIGDLGYVIHVSNKIINVSYKTLIVFTPTDNGVIISGSNIETAPVDIGKNISITVTIDKNNITICKELTINIT.

This is an uncharacterized protein from Methanocaldococcus jannaschii (strain ATCC 43067 / DSM 2661 / JAL-1 / JCM 10045 / NBRC 100440) (Methanococcus jannaschii).